Here is a 700-residue protein sequence, read N- to C-terminus: Probable transcription factor FUP6 (700 aa).

2 disordered regions span residues 343–364 and 577–624; these read SEAGLGRATSEDESSQKHNRHS and FDSV…PLNQ. Over residues 577 to 595 the composition is skewed to polar residues; the sequence is FDSVHSGRDSVSSAMNYQS. A compositionally biased stretch (basic and acidic residues) spans 596-607; sequence DSRKRARLDTES. Residues 608-623 are compositionally biased toward polar residues; the sequence is NPRSSQRNDGSGQPLN.

It is found in the nucleus. Probable transcrition factor; part of the gene cluster that mediates the biosynthesis of the mycotoxin fusaproliferin (FUP) that belongs to the class of bicyclic sesterterpenoids. The protein is Probable transcription factor FUP6 of Fusarium proliferatum (strain ET1) (Orchid endophyte fungus).